The sequence spans 482 residues: MVESQKAMPQPKMGRIRRIHFVGIGGVGMCGIAEVLLNLGYEVSGSDLKASPVTERLESFGAEIFVGHRAENAATADVLVVSSAINPANPEVATALERRIPVVPRAEMLAELMRYRHGVAVAGTHGKTTTTSLLASVFAAGGLDPTFVIGGRLTAAGTNAQLGTSRYLIAEADESDASFLHLQPMVAVVTNIDADHMATYEGDFNKLKKTFVEFLHNLPFYGLAVMCLDDPVVREILPQVKRPTVTYGFSEEADIRAINVRQQGMQTHFTVLRRDREPLEVSVNMPGNHNVLNALATIAIATDEGITDEAIVQGLSGFQGVGRRFQVYGELPVEGGSVMLVDDYGHHPTEVAAVIKAVRGGWPSRRLVIVYQPHRYSRTRDLYDDFVQVLGDANVLLLMEVYPAGEEPIPGADSRQLCHSIRQRGKLDPIYIERGAELAPLVKPLLRAGDILLCQGAGDVGGLAPQLMKSPLFAGAKQEKSK.

123-129 is a binding site for ATP; that stretch reads GTHGKTT.

The protein belongs to the MurCDEF family.

It is found in the cytoplasm. The enzyme catalyses UDP-N-acetyl-alpha-D-muramate + L-alanine + ATP = UDP-N-acetyl-alpha-D-muramoyl-L-alanine + ADP + phosphate + H(+). The protein operates within cell wall biogenesis; peptidoglycan biosynthesis. Functionally, cell wall formation. This Pseudomonas putida (strain ATCC 47054 / DSM 6125 / CFBP 8728 / NCIMB 11950 / KT2440) protein is UDP-N-acetylmuramate--L-alanine ligase.